We begin with the raw amino-acid sequence, 874 residues long: Alanine--tRNA ligase (874 aa).

Zn(2+)-binding residues include H563, H567, C665, and H669.

It belongs to the class-II aminoacyl-tRNA synthetase family. The cofactor is Zn(2+).

It is found in the cytoplasm. It carries out the reaction tRNA(Ala) + L-alanine + ATP = L-alanyl-tRNA(Ala) + AMP + diphosphate. Functionally, catalyzes the attachment of alanine to tRNA(Ala) in a two-step reaction: alanine is first activated by ATP to form Ala-AMP and then transferred to the acceptor end of tRNA(Ala). Also edits incorrectly charged Ser-tRNA(Ala) and Gly-tRNA(Ala) via its editing domain. This is Alanine--tRNA ligase from Haemophilus influenzae (strain 86-028NP).